The following is a 141-amino-acid chain: Nucleoside diphosphate kinase (141 aa).

Lysine 9, phenylalanine 57, arginine 85, threonine 91, arginine 102, and asparagine 112 together coordinate ATP. Histidine 115 functions as the Pros-phosphohistidine intermediate in the catalytic mechanism.

The protein belongs to the NDK family. As to quaternary structure, homotetramer. Requires Mg(2+) as cofactor.

The protein localises to the cytoplasm. The catalysed reaction is a 2'-deoxyribonucleoside 5'-diphosphate + ATP = a 2'-deoxyribonucleoside 5'-triphosphate + ADP. It carries out the reaction a ribonucleoside 5'-diphosphate + ATP = a ribonucleoside 5'-triphosphate + ADP. Functionally, major role in the synthesis of nucleoside triphosphates other than ATP. The ATP gamma phosphate is transferred to the NDP beta phosphate via a ping-pong mechanism, using a phosphorylated active-site intermediate. The sequence is that of Nucleoside diphosphate kinase from Prosthecochloris aestuarii (strain DSM 271 / SK 413).